Consider the following 671-residue polypeptide: DNA ligase (671 aa).

Residues 32–36 (DAEYD), 81–82 (SL), and glutamate 113 each bind NAD(+). Lysine 115 (N6-AMP-lysine intermediate) is an active-site residue. Positions 136, 173, 290, and 314 each coordinate NAD(+). Zn(2+) is bound by residues cysteine 408, cysteine 411, cysteine 426, and cysteine 432. Residues 593 to 671 (EIDSPFAGKT…ETEMLRLLGS (79 aa)) enclose the BRCT domain.

Belongs to the NAD-dependent DNA ligase family. LigA subfamily. It depends on Mg(2+) as a cofactor. Requires Mn(2+) as cofactor.

The enzyme catalyses NAD(+) + (deoxyribonucleotide)n-3'-hydroxyl + 5'-phospho-(deoxyribonucleotide)m = (deoxyribonucleotide)n+m + AMP + beta-nicotinamide D-nucleotide.. In terms of biological role, DNA ligase that catalyzes the formation of phosphodiester linkages between 5'-phosphoryl and 3'-hydroxyl groups in double-stranded DNA using NAD as a coenzyme and as the energy source for the reaction. It is essential for DNA replication and repair of damaged DNA. The chain is DNA ligase from Escherichia fergusonii (strain ATCC 35469 / DSM 13698 / CCUG 18766 / IAM 14443 / JCM 21226 / LMG 7866 / NBRC 102419 / NCTC 12128 / CDC 0568-73).